Reading from the N-terminus, the 275-residue chain is Large ribosomal subunit protein uL2 (275 aa).

The tract at residues 222 to 257 (GTAMNAVDHPHGGGRGRSKGNNQPRSPWNQPAKGFK) is disordered. A compositionally biased stretch (polar residues) spans 240 to 250 (KGNNQPRSPWN).

Belongs to the universal ribosomal protein uL2 family. As to quaternary structure, part of the 50S ribosomal subunit. Forms a bridge to the 30S subunit in the 70S ribosome.

In terms of biological role, one of the primary rRNA binding proteins. Required for association of the 30S and 50S subunits to form the 70S ribosome, for tRNA binding and peptide bond formation. It has been suggested to have peptidyltransferase activity; this is somewhat controversial. Makes several contacts with the 16S rRNA in the 70S ribosome. The chain is Large ribosomal subunit protein uL2 from Endomicrobium trichonymphae.